A 390-amino-acid chain; its full sequence is Phosphopentomutase (390 aa).

The Mn(2+) site is built by Asp11, Asp283, His288, Asp324, His325, and His336.

This sequence belongs to the phosphopentomutase family. It depends on Mn(2+) as a cofactor.

The protein localises to the cytoplasm. It carries out the reaction 2-deoxy-alpha-D-ribose 1-phosphate = 2-deoxy-D-ribose 5-phosphate. It catalyses the reaction alpha-D-ribose 1-phosphate = D-ribose 5-phosphate. It participates in carbohydrate degradation; 2-deoxy-D-ribose 1-phosphate degradation; D-glyceraldehyde 3-phosphate and acetaldehyde from 2-deoxy-alpha-D-ribose 1-phosphate: step 1/2. Functionally, isomerase that catalyzes the conversion of deoxy-ribose 1-phosphate (dRib-1-P) and ribose 1-phosphate (Rib-1-P) to deoxy-ribose 5-phosphate (dRib-5-P) and ribose 5-phosphate (Rib-5-P), respectively. The polypeptide is Phosphopentomutase (Alkaliphilus metalliredigens (strain QYMF)).